Here is a 253-residue protein sequence, read N- to C-terminus: Imidazole glycerol phosphate synthase subunit HisF (253 aa).

Catalysis depends on residues Asp-11 and Asp-130.

The protein belongs to the HisA/HisF family. In terms of assembly, heterodimer of HisH and HisF.

It localises to the cytoplasm. The enzyme catalyses 5-[(5-phospho-1-deoxy-D-ribulos-1-ylimino)methylamino]-1-(5-phospho-beta-D-ribosyl)imidazole-4-carboxamide + L-glutamine = D-erythro-1-(imidazol-4-yl)glycerol 3-phosphate + 5-amino-1-(5-phospho-beta-D-ribosyl)imidazole-4-carboxamide + L-glutamate + H(+). Its pathway is amino-acid biosynthesis; L-histidine biosynthesis; L-histidine from 5-phospho-alpha-D-ribose 1-diphosphate: step 5/9. In terms of biological role, IGPS catalyzes the conversion of PRFAR and glutamine to IGP, AICAR and glutamate. The HisF subunit catalyzes the cyclization activity that produces IGP and AICAR from PRFAR using the ammonia provided by the HisH subunit. This Geobacter sulfurreducens (strain ATCC 51573 / DSM 12127 / PCA) protein is Imidazole glycerol phosphate synthase subunit HisF.